A 311-amino-acid chain; its full sequence is 1D-myo-inositol 2-acetamido-2-deoxy-alpha-D-glucopyranoside deacetylase (311 aa).

The Zn(2+) site is built by H29, D32, and H162.

It belongs to the MshB deacetylase family. The cofactor is Zn(2+).

It catalyses the reaction 1D-myo-inositol 2-acetamido-2-deoxy-alpha-D-glucopyranoside + H2O = 1D-myo-inositol 2-amino-2-deoxy-alpha-D-glucopyranoside + acetate. Its function is as follows. Catalyzes the deacetylation of 1D-myo-inositol 2-acetamido-2-deoxy-alpha-D-glucopyranoside (GlcNAc-Ins) in the mycothiol biosynthesis pathway. The chain is 1D-myo-inositol 2-acetamido-2-deoxy-alpha-D-glucopyranoside deacetylase from Corynebacterium efficiens (strain DSM 44549 / YS-314 / AJ 12310 / JCM 11189 / NBRC 100395).